The sequence spans 945 residues: Leucine--tRNA ligase (945 aa).

The 'HIGH' region signature appears at 66–77 (PYPSGTGLHVGH). Positions 716 to 720 (KMGKS) match the 'KMSKS' region motif. Lys719 is an ATP binding site.

This sequence belongs to the class-I aminoacyl-tRNA synthetase family.

The protein localises to the cytoplasm. The catalysed reaction is tRNA(Leu) + L-leucine + ATP = L-leucyl-tRNA(Leu) + AMP + diphosphate. This Rhodococcus jostii (strain RHA1) protein is Leucine--tRNA ligase.